The sequence spans 583 residues: Ras-specific guanine nucleotide-releasing factor RalGPS2 (583 aa).

The Ras-GEF domain maps to 49-287 (TPEEYAGQIT…YKLSLKIEPG (239 aa)). The tract at residues 283–314 (KIEPGTSTPRSAASREDLVGPEVGASPQSGRK) is disordered. Phosphoserine occurs at positions 293, 296, 308, and 311. Residues 324-327 (PQTP) carry the PXXP motif. Thr-326 carries the post-translational modification Phosphothreonine. 2 positions are modified to phosphoserine: Ser-329 and Ser-343. Thr-361 is subject to Phosphothreonine. Positions 372–406 (DDSVMEPHAPSRGQAESSTLSSGISIGSSDGSELS) are disordered. Position 374 is a phosphoserine (Ser-374). A compositionally biased stretch (low complexity) spans 387–403 (ESSTLSSGISIGSSDGS). Ser-422 carries the post-translational modification Phosphoserine. A PH domain is found at 457-569 (AVTIQGVLRR…WFKHLSAACQ (113 aa)). The segment at 459 to 583 (TIQGVLRRKT…QVPTNLMTFE (125 aa)) is required for stimulation of nucleotide exchange by RALA.

As to quaternary structure, interacts with the SH3 domains of GRB2 and PLCG1. Interacts with RALA.

The protein resides in the cytoplasm. Its subcellular location is the cell membrane. Its function is as follows. Guanine nucleotide exchange factor for the small GTPase RALA. May be involved in cytoskeletal organization. May also be involved in the stimulation of transcription in a Ras-independent fashion. The sequence is that of Ras-specific guanine nucleotide-releasing factor RalGPS2 (RALGPS2) from Homo sapiens (Human).